The primary structure comprises 382 residues: MESVERVNLLGLDGAALSELVGQWGGKPFRARQLQRWVHQRGADSFDAMTDLARDFRAQLARDCVIEALPVNTEQRSSDGTRKWLFDVGQGNAIETVFIPEDDRGTLCISSQAGCVVNCRFCSTGHQGFNRNLRASEIIGQLWWAKRVLEAAADTARLPGGKAGEDTRVISNVVMMGMGEPLLNYDQVLPALRLMLDDNAYGLSRRRVTVSTSGVVPMMDRLSQDCPLALAVSLHAPNDALRDELVPLNRKYPLNALLAACERYLAHAPRDFITFEYCMLDGINDTDQHARELIQLARQVRCKLNLIPFNPFPASGLKRSPSARVRVFAQRLMDAGIVTTVRKTRGDDIDAACGQLAGEVRDRTRITERNATRTIPIQQVHA.

Glutamate 95 (proton acceptor) is an active-site residue. The 248-residue stretch at 101–348 (EDDRGTLCIS…TTVRKTRGDD (248 aa)) folds into the Radical SAM core domain. Cysteine 108 and cysteine 353 are disulfide-bonded. [4Fe-4S] cluster is bound by residues cysteine 115, cysteine 119, and cysteine 122. S-adenosyl-L-methionine-binding positions include 179–180 (GE), serine 211, 233–235 (SLH), and asparagine 310. Cysteine 353 (S-methylcysteine intermediate) is an active-site residue.

The protein belongs to the radical SAM superfamily. RlmN family. Requires [4Fe-4S] cluster as cofactor.

The protein localises to the cytoplasm. It carries out the reaction adenosine(2503) in 23S rRNA + 2 reduced [2Fe-2S]-[ferredoxin] + 2 S-adenosyl-L-methionine = 2-methyladenosine(2503) in 23S rRNA + 5'-deoxyadenosine + L-methionine + 2 oxidized [2Fe-2S]-[ferredoxin] + S-adenosyl-L-homocysteine. The enzyme catalyses adenosine(37) in tRNA + 2 reduced [2Fe-2S]-[ferredoxin] + 2 S-adenosyl-L-methionine = 2-methyladenosine(37) in tRNA + 5'-deoxyadenosine + L-methionine + 2 oxidized [2Fe-2S]-[ferredoxin] + S-adenosyl-L-homocysteine. In terms of biological role, specifically methylates position 2 of adenine 2503 in 23S rRNA and position 2 of adenine 37 in tRNAs. m2A2503 modification seems to play a crucial role in the proofreading step occurring at the peptidyl transferase center and thus would serve to optimize ribosomal fidelity. This chain is Dual-specificity RNA methyltransferase RlmN, found in Bordetella parapertussis (strain 12822 / ATCC BAA-587 / NCTC 13253).